Reading from the N-terminus, the 283-residue chain is N-terminal Xaa-Pro-Lys N-methyltransferase 2 (283 aa).

Residues glycine 124, arginine 129, aspartate 146, 174–175 (LQ), glutamine 190, and histidine 195 each bind S-adenosyl-L-methionine.

Belongs to the methyltransferase superfamily. NTM1 family.

It is found in the nucleus. It carries out the reaction N-terminal L-alanyl-L-prolyl-L-lysyl-[protein] + S-adenosyl-L-methionine = N-terminal N-methyl-L-alanyl-L-prolyl-L-lysyl-[protein] + S-adenosyl-L-homocysteine + H(+). It catalyses the reaction N-terminal L-prolyl-L-prolyl-L-lysyl-[protein] + S-adenosyl-L-methionine = N-terminal N-methyl-L-prolyl-L-prolyl-L-lysyl-[protein] + S-adenosyl-L-homocysteine + H(+). The catalysed reaction is N-terminal L-seryl-L-prolyl-L-lysyl-[protein] + S-adenosyl-L-methionine = N-terminal N-methyl-L-seryl-L-prolyl-L-lysyl-[protein] + S-adenosyl-L-homocysteine + H(+). Functionally, alpha N-methyltransferase that methylates the N-terminus of target proteins containing the N-terminal motif [Ala/Pro/Ser]-Pro-Lys when the initiator Met is cleaved. Specifically catalyzes monomethylation of exposed alpha-amino group of Ala or Ser residue in the [Ala/Ser]-Pro-Lys motif and Pro in the Pro-Pro-Lys motif. Predominantly functions as a mono-methyltransferase but is also able to di-/tri-methylate the GPKRIA peptide and di-methylate the PPKRIA peptide (in vitro). May activate NTMT1 by priming its substrates for trimethylation. The protein is N-terminal Xaa-Pro-Lys N-methyltransferase 2 of Homo sapiens (Human).